We begin with the raw amino-acid sequence, 215 residues long: RNA pyrophosphohydrolase (215 aa).

The Nudix hydrolase domain occupies 6–149 (GFRPNVGIIL…KRDVYQLALT (144 aa)). The short motif at 38–59 (GGIKYGETPMQAMYRELHEETG) is the Nudix box element.

Belongs to the Nudix hydrolase family. RppH subfamily. Requires a divalent metal cation as cofactor.

Functionally, accelerates the degradation of transcripts by removing pyrophosphate from the 5'-end of triphosphorylated RNA, leading to a more labile monophosphorylated state that can stimulate subsequent ribonuclease cleavage. The chain is RNA pyrophosphohydrolase from Burkholderia multivorans (strain ATCC 17616 / 249).